Reading from the N-terminus, the 153-residue chain is 6,7-dimethyl-8-ribityllumazine synthase (153 aa).

5-amino-6-(D-ribitylamino)uracil contacts are provided by residues phenylalanine 22, 56–58 (AFE), and 80–82 (TVI). 85-86 (AT) contributes to the (2S)-2-hydroxy-3-oxobutyl phosphate binding site. Histidine 88 acts as the Proton donor in catalysis. Residue phenylalanine 113 coordinates 5-amino-6-(D-ribitylamino)uracil. Arginine 127 is a (2S)-2-hydroxy-3-oxobutyl phosphate binding site.

The protein belongs to the DMRL synthase family.

It catalyses the reaction (2S)-2-hydroxy-3-oxobutyl phosphate + 5-amino-6-(D-ribitylamino)uracil = 6,7-dimethyl-8-(1-D-ribityl)lumazine + phosphate + 2 H2O + H(+). Its pathway is cofactor biosynthesis; riboflavin biosynthesis; riboflavin from 2-hydroxy-3-oxobutyl phosphate and 5-amino-6-(D-ribitylamino)uracil: step 1/2. Catalyzes the formation of 6,7-dimethyl-8-ribityllumazine by condensation of 5-amino-6-(D-ribitylamino)uracil with 3,4-dihydroxy-2-butanone 4-phosphate. This is the penultimate step in the biosynthesis of riboflavin. This Clostridium perfringens (strain 13 / Type A) protein is 6,7-dimethyl-8-ribityllumazine synthase.